The following is a 305-amino-acid chain: tRNA pseudouridine synthase B (305 aa).

The active-site Nucleophile is Asp39.

Belongs to the pseudouridine synthase TruB family. Type 1 subfamily.

It carries out the reaction uridine(55) in tRNA = pseudouridine(55) in tRNA. Its function is as follows. Responsible for synthesis of pseudouridine from uracil-55 in the psi GC loop of transfer RNAs. In Staphylococcus haemolyticus (strain JCSC1435), this protein is tRNA pseudouridine synthase B.